We begin with the raw amino-acid sequence, 282 residues long: Bis(5'-nucleosyl)-tetraphosphatase, symmetrical (282 aa).

This sequence belongs to the Ap4A hydrolase family.

It carries out the reaction P(1),P(4)-bis(5'-adenosyl) tetraphosphate + H2O = 2 ADP + 2 H(+). Functionally, hydrolyzes diadenosine 5',5'''-P1,P4-tetraphosphate to yield ADP. The polypeptide is Bis(5'-nucleosyl)-tetraphosphatase, symmetrical (Burkholderia pseudomallei (strain 1106a)).